The chain runs to 108 residues: Insulin (108 aa).

The signal sequence occupies residues 1-24; it reads MALWMHLLPLLALLALWGPEPAPA. 3 cysteine pairs are disulfide-bonded: Cys31-Cys94, Cys43-Cys107, and Cys93-Cys98. A propeptide spans 57-85 (c peptide); sequence EAEDLQVGQVELGGGSITGSLPPLEGPMQ.

This sequence belongs to the insulin family. As to quaternary structure, heterodimer of a B chain and an A chain linked by two disulfide bonds.

The protein localises to the secreted. In terms of biological role, insulin decreases blood glucose concentration. It increases cell permeability to monosaccharides, amino acids and fatty acids. It accelerates glycolysis, the pentose phosphate cycle, and glycogen synthesis in liver. The sequence is that of Insulin (INS) from Aotus trivirgatus (Three-striped night monkey).